The sequence spans 184 residues: Holliday junction branch migration complex subunit RuvA (184 aa).

Residues 1–64 form a domain I region; the sequence is MIRAIEGIIT…EDANLLYGFL (64 aa). Positions 65–144 are domain II; that stretch reads DTNEQKMFEM…SDESVPGYQN (80 aa). Residue asparagine 144 is a region of interest, flexible linker. The tract at residues 144-184 is domain III; sequence NEALLALEALGFKREKIVKILPDLKSTSTSELVKEALKKLA.

This sequence belongs to the RuvA family. As to quaternary structure, homotetramer. Forms an RuvA(8)-RuvB(12)-Holliday junction (HJ) complex. HJ DNA is sandwiched between 2 RuvA tetramers; dsDNA enters through RuvA and exits via RuvB. An RuvB hexamer assembles on each DNA strand where it exits the tetramer. Each RuvB hexamer is contacted by two RuvA subunits (via domain III) on 2 adjacent RuvB subunits; this complex drives branch migration. In the full resolvosome a probable DNA-RuvA(4)-RuvB(12)-RuvC(2) complex forms which resolves the HJ.

The protein resides in the cytoplasm. The RuvA-RuvB-RuvC complex processes Holliday junction (HJ) DNA during genetic recombination and DNA repair, while the RuvA-RuvB complex plays an important role in the rescue of blocked DNA replication forks via replication fork reversal (RFR). RuvA specifically binds to HJ cruciform DNA, conferring on it an open structure. The RuvB hexamer acts as an ATP-dependent pump, pulling dsDNA into and through the RuvAB complex. HJ branch migration allows RuvC to scan DNA until it finds its consensus sequence, where it cleaves and resolves the cruciform DNA. In Campylobacter curvus (strain 525.92), this protein is Holliday junction branch migration complex subunit RuvA.